A 226-amino-acid chain; its full sequence is Transmembrane protein 204 (226 aa).

At 1 to 5 (MTVQR) the chain is on the cytoplasmic side. Residues 6–26 (LVAAAVLVALVSLILNNVAAF) traverse the membrane as a helical segment. Over 27-103 (TSNWVCQTLE…LQFDMMRACN (77 aa)) the chain is Extracellular. A helical membrane pass occupies residues 104–124 (LVATAALTAGQLTFLLGLVGL). The Cytoplasmic segment spans residues 125-136 (PLLSPDAPCWEE). Residues 137–157 (AMAAAFQLASFVLVIGLVTFY) form a helical membrane-spanning segment. Topologically, residues 158 to 170 (RIGPYTNLSWSCY) are extracellular. A glycan (N-linked (GlcNAc...) asparagine) is linked at asparagine 164. A helical transmembrane segment spans residues 171-191 (LNIGACLLATLAAAMLIWNIL). The Cytoplasmic portion of the chain corresponds to 192-226 (HKREDCMAPRVIVISRSLTARFRRGLDNDYVESPC).

As to expression, highly expressed in lung, heart, kidney and placenta. Lower expression in thymus, spleen, liver, testis and ovary. Expressed in endothelial and restricted epithelial cell populations.

The protein resides in the cell junction. It is found in the adherens junction. Its subcellular location is the cell membrane. In terms of biological role, can influence paracellular permeability. Appears to be involved in cell-cell interactions through adherens. This chain is Transmembrane protein 204 (TMEM204), found in Homo sapiens (Human).